We begin with the raw amino-acid sequence, 432 residues long: Enolase (432 aa).

Residue Gln-167 coordinates (2R)-2-phosphoglycerate. Catalysis depends on Glu-209, which acts as the Proton donor. Mg(2+) contacts are provided by Asp-246, Glu-290, and Asp-317. Lys-342, Arg-371, Ser-372, and Lys-393 together coordinate (2R)-2-phosphoglycerate. Lys-342 acts as the Proton acceptor in catalysis.

This sequence belongs to the enolase family. In terms of assembly, component of the RNA degradosome, a multiprotein complex involved in RNA processing and mRNA degradation. Requires Mg(2+) as cofactor.

Its subcellular location is the cytoplasm. It is found in the secreted. It localises to the cell surface. It carries out the reaction (2R)-2-phosphoglycerate = phosphoenolpyruvate + H2O. Its pathway is carbohydrate degradation; glycolysis; pyruvate from D-glyceraldehyde 3-phosphate: step 4/5. In terms of biological role, catalyzes the reversible conversion of 2-phosphoglycerate (2-PG) into phosphoenolpyruvate (PEP). It is essential for the degradation of carbohydrates via glycolysis. In Escherichia coli O139:H28 (strain E24377A / ETEC), this protein is Enolase.